A 228-amino-acid polypeptide reads, in one-letter code: Large ribosomal subunit protein uL3 (228 aa).

This sequence belongs to the universal ribosomal protein uL3 family. As to quaternary structure, part of the 50S ribosomal subunit. Forms a cluster with proteins L14 and L19.

Its function is as follows. One of the primary rRNA binding proteins, it binds directly near the 3'-end of the 23S rRNA, where it nucleates assembly of the 50S subunit. The sequence is that of Large ribosomal subunit protein uL3 from Leuconostoc mesenteroides subsp. mesenteroides (strain ATCC 8293 / DSM 20343 / BCRC 11652 / CCM 1803 / JCM 6124 / NCDO 523 / NBRC 100496 / NCIMB 8023 / NCTC 12954 / NRRL B-1118 / 37Y).